The sequence spans 1042 residues: Ubiquitin carboxyl-terminal hydrolase 38 (1042 aa).

The USP domain maps to 445–949 (TGLINLGNTC…TAYVLLYKKQ (505 aa)). Cysteine 454 functions as the Nucleophile in the catalytic mechanism. Histidine 857 serves as the catalytic Proton acceptor.

It belongs to the peptidase C19 family. As to quaternary structure, interacts with isoform 1 of FBXW7; this interaction prevents FBXW7-mediated degradation of MYC. Highly expressed in skeletal muscle. Expressed in adrenal gland.

It is found in the cytoplasm. The protein resides in the nucleus. It catalyses the reaction Thiol-dependent hydrolysis of ester, thioester, amide, peptide and isopeptide bonds formed by the C-terminal Gly of ubiquitin (a 76-residue protein attached to proteins as an intracellular targeting signal).. Its function is as follows. Deubiquitinating enzyme that plays a role in various cellular processes, including DNA repair, cell cycle regulation, and immune response. Plays a role in the inhibition of type I interferon signaling by mediating the 'Lys-33' to 'Lys-48' ubiquitination transition of TBK1 leading to its degradation. Cleaves the ubiquitin chain from the histone demethylase LSD1/KDM1A and prevents it from degradation by the 26S proteasome, thus maintaining LSD1 protein level in cells. Plays a role in the DNA damage response by regulating the deacetylase activity of HDAC1. Mechanistically, removes the 'Lys-63'-linked ubiquitin chain promoting the deacetylase activity of HDAC1 in response to DNA damage. Also acts as a specific deubiquitinase of histone deacetylase 3/HDAC3 and cleaves its 'Lys-63'-linked ubiquitin chains to lower its histone deacetylase activity. Regulates MYC levels and cell proliferation via antagonizing ubiquitin E3 ligase FBXW7 thereby preventing MYC 'Lys-48'-linked ubiquitination and degradation. Participates in antiviral response by removing both 'Lys-48'-linked and 'Lys-63'-linked polyubiquitination of Zika virus envelope protein E. Constitutively associated with IL-33R/IL1RL1, deconjugates its 'Lys-27'-linked polyubiquitination resulting in its autophagic degradation. This chain is Ubiquitin carboxyl-terminal hydrolase 38 (USP38), found in Homo sapiens (Human).